Reading from the N-terminus, the 488-residue chain is Glutamyl-tRNA(Gln) amidotransferase subunit A (488 aa).

Residues K77 and S152 each act as charge relay system in the active site. S176 functions as the Acyl-ester intermediate in the catalytic mechanism.

This sequence belongs to the amidase family. GatA subfamily. Heterotrimer of A, B and C subunits.

It carries out the reaction L-glutamyl-tRNA(Gln) + L-glutamine + ATP + H2O = L-glutaminyl-tRNA(Gln) + L-glutamate + ADP + phosphate + H(+). Functionally, allows the formation of correctly charged Gln-tRNA(Gln) through the transamidation of misacylated Glu-tRNA(Gln) in organisms which lack glutaminyl-tRNA synthetase. The reaction takes place in the presence of glutamine and ATP through an activated gamma-phospho-Glu-tRNA(Gln). The chain is Glutamyl-tRNA(Gln) amidotransferase subunit A from Streptococcus agalactiae serotype III (strain NEM316).